The chain runs to 78 residues: Small ribosomal subunit protein uS17 (78 aa).

The protein belongs to the universal ribosomal protein uS17 family. Part of the 30S ribosomal subunit.

One of the primary rRNA binding proteins, it binds specifically to the 5'-end of 16S ribosomal RNA. The sequence is that of Small ribosomal subunit protein uS17 from Maricaulis maris (strain MCS10) (Caulobacter maris).